The following is a 212-amino-acid chain: Glycerol-3-phosphate acyltransferase (212 aa).

A run of 5 helical transmembrane segments spans residues 3-23 (ILLAALIAYLIGSVSFAVIVS), 51-71 (KAAILTLIGDAFKGWIAVWLA), 78-98 (DVAIAWVAIAVFIGHLYPVFF), 115-135 (AVHPVLGLATALTWLIIAFFF), and 139-159 (SLAALVAAVFAPLFDVFLFGT).

Belongs to the PlsY family. In terms of assembly, probably interacts with PlsX.

Its subcellular location is the cell inner membrane. It catalyses the reaction an acyl phosphate + sn-glycerol 3-phosphate = a 1-acyl-sn-glycero-3-phosphate + phosphate. It participates in lipid metabolism; phospholipid metabolism. In terms of biological role, catalyzes the transfer of an acyl group from acyl-phosphate (acyl-PO(4)) to glycerol-3-phosphate (G3P) to form lysophosphatidic acid (LPA). This enzyme utilizes acyl-phosphate as fatty acyl donor, but not acyl-CoA or acyl-ACP. This is Glycerol-3-phosphate acyltransferase from Burkholderia multivorans (strain ATCC 17616 / 249).